Consider the following 160-residue polypeptide: 6,7-dimethyl-8-ribityllumazine synthase (160 aa).

Residues Trp-28, 59 to 61 (SFE), and 82 to 84 (VII) contribute to the 5-amino-6-(D-ribitylamino)uracil site. A (2S)-2-hydroxy-3-oxobutyl phosphate-binding site is contributed by 87–88 (GT). The active-site Proton donor is the His-90. Residue Phe-115 coordinates 5-amino-6-(D-ribitylamino)uracil. Arg-129 is a binding site for (2S)-2-hydroxy-3-oxobutyl phosphate.

This sequence belongs to the DMRL synthase family.

The enzyme catalyses (2S)-2-hydroxy-3-oxobutyl phosphate + 5-amino-6-(D-ribitylamino)uracil = 6,7-dimethyl-8-(1-D-ribityl)lumazine + phosphate + 2 H2O + H(+). The protein operates within cofactor biosynthesis; riboflavin biosynthesis; riboflavin from 2-hydroxy-3-oxobutyl phosphate and 5-amino-6-(D-ribitylamino)uracil: step 1/2. Functionally, catalyzes the formation of 6,7-dimethyl-8-ribityllumazine by condensation of 5-amino-6-(D-ribitylamino)uracil with 3,4-dihydroxy-2-butanone 4-phosphate. This is the penultimate step in the biosynthesis of riboflavin. The chain is 6,7-dimethyl-8-ribityllumazine synthase from Clavibacter sepedonicus (Clavibacter michiganensis subsp. sepedonicus).